The following is a 192-amino-acid chain: UPF0312 protein Spro_1887 (192 aa).

The first 23 residues, 1–23 (MLKKTVLGLTAGAMLLSAGSALA), serve as a signal peptide directing secretion.

This sequence belongs to the UPF0312 family. Type 1 subfamily.

It is found in the periplasm. The chain is UPF0312 protein Spro_1887 from Serratia proteamaculans (strain 568).